The following is a 156-amino-acid chain: Small ribosomal subunit protein uS7 (156 aa).

Belongs to the universal ribosomal protein uS7 family. Part of the 30S ribosomal subunit. Contacts proteins S9 and S11.

Its function is as follows. One of the primary rRNA binding proteins, it binds directly to 16S rRNA where it nucleates assembly of the head domain of the 30S subunit. Is located at the subunit interface close to the decoding center, probably blocks exit of the E-site tRNA. In Deinococcus radiodurans (strain ATCC 13939 / DSM 20539 / JCM 16871 / CCUG 27074 / LMG 4051 / NBRC 15346 / NCIMB 9279 / VKM B-1422 / R1), this protein is Small ribosomal subunit protein uS7.